A 211-amino-acid polypeptide reads, in one-letter code: GTP-binding protein ypt5 (211 aa).

GTP is bound at residue 21-28 (GDSAVGKS). Positions 43 to 51 (RESTIGAAF) match the Effector region motif. GTP-binding positions include 70-74 (DTAGQ) and 128-131 (NKLD). Residues C209 and C211 are each lipidated (S-geranylgeranyl cysteine). A Cysteine methyl ester modification is found at C211.

Belongs to the small GTPase superfamily. Rab family.

Its subcellular location is the cell membrane. In terms of biological role, protein transport. Probably involved in vesicular traffic. In Schizosaccharomyces pombe (strain 972 / ATCC 24843) (Fission yeast), this protein is GTP-binding protein ypt5 (ypt5).